A 182-amino-acid chain; its full sequence is ATP-dependent protease subunit HslV (182 aa).

Residue Thr6 is part of the active site. Ala164, Cys167, and Thr170 together coordinate Na(+).

The protein belongs to the peptidase T1B family. HslV subfamily. In terms of assembly, a double ring-shaped homohexamer of HslV is capped on each side by a ring-shaped HslU homohexamer. The assembly of the HslU/HslV complex is dependent on binding of ATP.

It is found in the cytoplasm. The catalysed reaction is ATP-dependent cleavage of peptide bonds with broad specificity.. With respect to regulation, allosterically activated by HslU binding. Protease subunit of a proteasome-like degradation complex believed to be a general protein degrading machinery. This is ATP-dependent protease subunit HslV from Borreliella burgdorferi (strain ATCC 35210 / DSM 4680 / CIP 102532 / B31) (Borrelia burgdorferi).